We begin with the raw amino-acid sequence, 340 residues long: Central glycolytic genes regulator (340 aa).

Residues 37-56 (RRSLSASLGISERVLRGEVQ) constitute a DNA-binding region (H-T-H motif). Residues 149 to 152 (GGTT), Arg175, Gln185, 250 to 251 (RR), Glu269, and Lys310 each bind beta-D-fructose 1,6-bisphosphate.

It belongs to the SorC transcriptional regulatory family. In terms of assembly, homotetramer. Binds primarily as a dimer to each half-site of the full-length operator, with much higher affinity for the right site. Then, both dimers interact, bridging the two-half sites of the operator region.

With respect to regulation, stability and function are regulated by the effector molecule fructose-1,6-bisphosphate (FBP). In the presence of glucose, binding of FBP to the low-affinity sugar-binding site of CggR disrupts dimer/dimer bridging interactions and triggers a tetramer to dimer transition, which leaves two physically independent dimers on the target DNA and allows transcription of the downstream coding sequences by the RNA polymerase. In addition, FBP and several other phosphorylated compounds can bind to a high-affinity binding-site and protect CggR against aggregation and proteolysis. Its function is as follows. In the absence of glucose, represses the transcription of the gapA operon, which encodes five key glycolytic enzymes. Binds specifically to the cggR-gapA promoter region and blocks the progression of the RNA polymerase, leading to the arrest of the transcription. This is Central glycolytic genes regulator (cggR) from Bacillus subtilis (strain 168).